The primary structure comprises 193 residues: Nucleoside triphosphate pyrophosphatase (193 aa).

Residue Asp-69 is the Proton acceptor of the active site.

It belongs to the Maf family. It depends on a divalent metal cation as a cofactor.

It is found in the cytoplasm. The catalysed reaction is a ribonucleoside 5'-triphosphate + H2O = a ribonucleoside 5'-phosphate + diphosphate + H(+). It carries out the reaction a 2'-deoxyribonucleoside 5'-triphosphate + H2O = a 2'-deoxyribonucleoside 5'-phosphate + diphosphate + H(+). Functionally, nucleoside triphosphate pyrophosphatase. May have a dual role in cell division arrest and in preventing the incorporation of modified nucleotides into cellular nucleic acids. The protein is Nucleoside triphosphate pyrophosphatase of Parasynechococcus marenigrum (strain WH8102).